The sequence spans 78 residues: Omega-conotoxin-like 12 (78 aa).

A signal peptide spans 1-22 (MKLTCVVIVAVLLLTACQLITA). The propeptide occupies 23–42 (DDSRGTQKHRSLRSTTKVSK). 3 cysteine pairs are disulfide-bonded: Cys-46–Cys-62, Cys-53–Cys-65, and Cys-61–Cys-72.

It belongs to the conotoxin O1 superfamily. In terms of tissue distribution, expressed by the venom duct.

It is found in the secreted. In terms of biological role, omega-conotoxins act at presynaptic membranes, they bind and block voltage-gated calcium channels (Cav). The polypeptide is Omega-conotoxin-like 12 (Conus striatus (Striated cone)).